The following is an 878-amino-acid chain: Vacuolar membrane protease (878 aa).

The Cytoplasmic portion of the chain corresponds to 1–16 (MASLRLPRANPLAFTR). The helical transmembrane segment at 17-37 (WPVTVITAIVYLALLIPLLVV) threads the bilayer. Over 38–390 (HHVVPSAPSS…STFVLFQLHT (353 aa)) the chain is Vacuolar. N53 and N119 each carry an N-linked (GlcNAc...) asparagine glycan. The Zn(2+) site is built by H174 and D186. E220 functions as the Proton acceptor in the catalytic mechanism. Residues E221, E246, and H319 each coordinate Zn(2+). Residues 391–411 (LFALLVTLLIVGPLTLLFTSI) traverse the membrane as a helical segment. At 412-442 (ALTKADKMYLFRSSAKSEDRLDVVPLQGLRG) the chain is on the cytoplasmic side. A helical transmembrane segment spans residues 443-463 (FFRFPFLFGIPTVVTVGLAYL). At 464–473 (VTKVNPYIIH) the chain is on the vacuolar side. Residues 474-494 (SSAYAVWSMMVAAWVFLAWFV) traverse the membrane as a helical segment. The Cytoplasmic segment spans residues 495 to 508 (SRVADFARPSAFHR). The chain crosses the membrane as a helical span at residues 509–529 (IYTLTWMYVLSWVSAVIATVY). Over 530-533 (ANQR) the chain is Vacuolar. The chain crosses the membrane as a helical span at residues 534-554 (GLAGGYFIFFFHAGIFLATWI). The Cytoplasmic portion of the chain corresponds to 555 to 659 (SYLELFALPS…ALPKWTWGLQ (105 aa)). Residues 577-590 (GRASGHGSRRGTTS) are compositionally biased toward low complexity. The disordered stretch occupies residues 577 to 611 (GRASGHGSRRGTTSGEDDGEEAEEEPTESTSLLGS). Positions 591–603 (GEDDGEEAEEEPT) are enriched in acidic residues. A helical transmembrane segment spans residues 660–680 (LLLTAPITLIMVGPLALLTIS). Over 681 to 693 (AISQTGQDGGHPL) the chain is Vacuolar. Residues 694–714 (FAYVAIAIFTTIMLTPLLPFI) form a helical membrane-spanning segment. Topologically, residues 715 to 721 (HRYTYHV) are cytoplasmic. The helical transmembrane segment at 722 to 742 (PLFLLAVFLGTLIYNLVAFPF) threads the bilayer. The Vacuolar portion of the chain corresponds to 743–878 (SDSNRLKLYY…RRAFEIGNDD (136 aa)).

The protein belongs to the peptidase M28 family. Zn(2+) serves as cofactor.

It is found in the vacuole membrane. May be involved in vacuolar sorting and osmoregulation. The polypeptide is Vacuolar membrane protease (Aspergillus flavus (strain ATCC 200026 / FGSC A1120 / IAM 13836 / NRRL 3357 / JCM 12722 / SRRC 167)).